Here is a 771-residue protein sequence, read N- to C-terminus: DnaJ homolog subfamily C member 16 (771 aa).

The signal sequence occupies residues 1–25 (MELKRLSISWQFLIVLVLILQSLSA). Over 26-532 (LDFDPYRVLG…ESLLHSNWRE (507 aa)) the chain is Cytoplasmic. Residues 29 to 93 (DPYRVLGVSR…EKRTNYDHYG (65 aa)) enclose the J domain. One can recognise a Thioredoxin domain in the interval 116–244 (FYFDESFFHF…LRQFVESLLP (129 aa)). Residues 533–553 (MMPLLSLIFSALFILFGTVIV) traverse the membrane as a helical; Anchor for type IV membrane protein segment. At 554–771 (QAFSDSNEER…FYIPSWPELD (218 aa)) the chain is on the extracellular side. Positions 559-590 (SNEERESHPPDKEEVPEKAGKTEPSFTKESSS) are disordered. Basic and acidic residues predominate over residues 560–579 (NEERESHPPDKEEVPEKAGK). A glycan (N-linked (GlcNAc...) asparagine) is linked at Asn628.

It is found in the endoplasmic reticulum membrane. Its function is as follows. Plays an important role in regulating the size of autophagosomes during the formation process. In Rattus norvegicus (Rat), this protein is DnaJ homolog subfamily C member 16 (Dnajc16).